The chain runs to 156 residues: Small ribosomal subunit protein uS7 (156 aa).

This sequence belongs to the universal ribosomal protein uS7 family. As to quaternary structure, part of the 30S ribosomal subunit. Contacts proteins S9 and S11.

Functionally, one of the primary rRNA binding proteins, it binds directly to 16S rRNA where it nucleates assembly of the head domain of the 30S subunit. Is located at the subunit interface close to the decoding center, probably blocks exit of the E-site tRNA. The chain is Small ribosomal subunit protein uS7 from Methylibium petroleiphilum (strain ATCC BAA-1232 / LMG 22953 / PM1).